Here is a 178-residue protein sequence, read N- to C-terminus: NADH-ubiquinone oxidoreductase chain 6 (178 aa).

5 helical membrane-spanning segments follow: residues 1–21, 25–45, 48–68, 89–109, and 152–172; these read MMTY…VGFS, SPIY…GIVL, GGSF…LVVF, VLLT…YLLL, and YGYW…IVVM.

Belongs to the complex I subunit 6 family.

The protein resides in the mitochondrion membrane. It carries out the reaction a ubiquinone + NADH + 5 H(+)(in) = a ubiquinol + NAD(+) + 4 H(+)(out). Functionally, core subunit of the mitochondrial membrane respiratory chain NADH dehydrogenase (Complex I) that is believed to belong to the minimal assembly required for catalysis. Complex I functions in the transfer of electrons from NADH to the respiratory chain. The immediate electron acceptor for the enzyme is believed to be ubiquinone. This is NADH-ubiquinone oxidoreductase chain 6 (MT-ND6) from Pseudosoriculus fumidus (Taiwanese brown-toothed shrew).